The sequence spans 567 residues: 2-succinyl-5-enolpyruvyl-6-hydroxy-3-cyclohexene-1-carboxylate synthase (567 aa).

This sequence belongs to the TPP enzyme family. MenD subfamily. In terms of assembly, homodimer. Requires Mg(2+) as cofactor. Mn(2+) is required as a cofactor. Thiamine diphosphate serves as cofactor.

It carries out the reaction isochorismate + 2-oxoglutarate + H(+) = 5-enolpyruvoyl-6-hydroxy-2-succinyl-cyclohex-3-ene-1-carboxylate + CO2. It participates in quinol/quinone metabolism; 1,4-dihydroxy-2-naphthoate biosynthesis; 1,4-dihydroxy-2-naphthoate from chorismate: step 2/7. Its pathway is quinol/quinone metabolism; menaquinone biosynthesis. Its function is as follows. Catalyzes the thiamine diphosphate-dependent decarboxylation of 2-oxoglutarate and the subsequent addition of the resulting succinic semialdehyde-thiamine pyrophosphate anion to isochorismate to yield 2-succinyl-5-enolpyruvyl-6-hydroxy-3-cyclohexene-1-carboxylate (SEPHCHC). The polypeptide is 2-succinyl-5-enolpyruvyl-6-hydroxy-3-cyclohexene-1-carboxylate synthase (Yersinia pestis bv. Antiqua (strain Angola)).